A 479-amino-acid chain; its full sequence is Phosphatidylinositol 4-kinase type 2-alpha (479 aa).

Position 1 is an N-acetylmethionine (Met1). The disordered stretch occupies residues 1 to 58; that stretch reads MDETSPLVSPERAQPPEYTFPSGSGAHFPQVPGGAVRVAAAAGSGPSPPCSPGHDRER. Phosphoserine is present on residues Ser5, Ser9, Ser44, Ser47, and Ser51. Positions 31–45 are enriched in low complexity; it reads VPGGAVRVAAAAGSG. The PI3K/PI4K catalytic domain occupies 124–453; sequence SIYPERIYQG…VQMPPVIVET (330 aa). Positions 130–136 are G-loop; the sequence is IYQGSSG. ATP-binding positions include 131–137 and Lys152; that span reads YQGSSGS. The interval 157–159 is important for substrate binding; sequence EPY. The important for interaction with membranes stretch occupies residues 165 to 178; that stretch reads KWTKWLQKLCCPCC. Residues Cys174, Cys175, Cys177, and Cys178 are each lipidated (S-palmitoyl cysteine). 261-264 contacts ATP; that stretch reads QLFV. Residues 268 to 276 are important for interaction with membranes; that stretch reads KDADYWLRR. The interval 305-313 is catalytic loop; it reads RNTDRGNDN. Residues 344-364 are activation loop; it reads AIDNGLAFPLKHPDSWRAYPF. Asp346 is an ATP binding site. An important for interaction with membranes region spans residues 359–368; it reads WRAYPFYWAW. Ser462 carries the post-translational modification Phosphoserine.

The protein belongs to the PI3/PI4-kinase family. Type II PI4K subfamily. Associates with the BLOC-1 and the AP-3 complexes; the BLOC-1 complex is required for optimal binding of PI4K2A to the AP-3 complex. Interacts with BLOC1S5 and DTNBP1. Interacts with ITCH. Interacts with FOS; this interaction may enhance phosphatidylinositol phosphorylation activity. Interacts with ATG9A. In terms of processing, palmitoylated by ZDHHC3 and ZDHHC7 in the CCPCC motif. Palmitoylation is cholesterol-dependent, and required for TGN localization. Post-translationally, ubiquitinated by ITCH; this does not lead to proteasomal degradation. In terms of tissue distribution, detected in brain (at protein level).

It localises to the golgi apparatus. The protein localises to the trans-Golgi network membrane. It is found in the membrane raft. Its subcellular location is the endosome. The protein resides in the endosome membrane. It localises to the cytoplasmic vesicle. The protein localises to the cell projection. It is found in the dendrite. Its subcellular location is the presynaptic cell membrane. The protein resides in the synapse. It localises to the synaptosome. The protein localises to the mitochondrion. It is found in the membrane. Its subcellular location is the cell membrane. The protein resides in the perikaryon. It localises to the neuron projection. It catalyses the reaction a 1,2-diacyl-sn-glycero-3-phospho-(1D-myo-inositol) + ATP = a 1,2-diacyl-sn-glycero-3-phospho-(1D-myo-inositol 4-phosphate) + ADP + H(+). Its function is as follows. Membrane-bound phosphatidylinositol-4 kinase (PI4-kinase) that catalyzes the phosphorylation of phosphatidylinositol (PI) to phosphatidylinositol 4-phosphate (PI4P), a lipid that plays important roles in endocytosis, Golgi function, protein sorting and membrane trafficking and is required for prolonged survival of neurons. Besides, phosphorylation of phosphatidylinositol (PI) to phosphatidylinositol 4-phosphate (PI4P) is the first committed step in the generation of phosphatidylinositol 4,5-bisphosphate (PIP2), a precursor of the second messenger inositol 1,4,5-trisphosphate (InsP3). This chain is Phosphatidylinositol 4-kinase type 2-alpha (Pi4k2a), found in Mus musculus (Mouse).